A 919-amino-acid chain; its full sequence is Probable dipeptidyl-aminopeptidase B (919 aa).

Positions 1–89 (MGANSRVNDD…DGYVPSGGKP (89 aa)) are disordered. Residues 1–95 (MGANSRVNDD…GGKPAQRRTR (95 aa)) lie on the Cytoplasmic side of the membrane. Residues 27 to 38 (DSSSTASISLTL) show a composition bias toward low complexity. The span at 44 to 55 (HTATEPSKSTNG) shows a compositional bias: polar residues. A helical; Signal-anchor for type II membrane protein transmembrane segment spans residues 96–116 (IVFWLLVALCVGGWAMAFIIM). Topologically, residues 117–919 (ATSPNNRHST…RVIRRLLHFG (803 aa)) are vacuolar. The segment at 121 to 150 (NNRHSTSDSSSGGSESEIVKPNTPHDGKKI) is disordered. Positions 127-136 (SDSSSGGSES) are enriched in low complexity. Residues N207, N303, N355, N577, and N665 are each glycosylated (N-linked (GlcNAc...) asparagine). S760 functions as the Charge relay system in the catalytic mechanism. N-linked (GlcNAc...) asparagine glycans are attached at residues N814 and N819. Catalysis depends on charge relay system residues D837 and H870.

Belongs to the peptidase S9B family.

It localises to the vacuole membrane. The enzyme catalyses Release of an N-terminal dipeptide, Xaa-Yaa-|-Zaa-, from a polypeptide, preferentially when Yaa is Pro, provided Zaa is neither Pro nor hydroxyproline.. Its function is as follows. Type IV dipeptidyl-peptidase which removes N-terminal dipeptides sequentially from polypeptides having unsubstituted N-termini provided that the penultimate residue is proline. This Arthroderma otae (strain ATCC MYA-4605 / CBS 113480) (Microsporum canis) protein is Probable dipeptidyl-aminopeptidase B (DAPB).